A 196-amino-acid chain; its full sequence is Nucleoid occlusion factor SlmA (196 aa).

The HTH tetR-type domain maps to 7–68 (PNRRDEILQA…GLIEFIEESI (62 aa)). Residues 31 to 50 (TTAKLAKQVGVSEAALYRHF) constitute a DNA-binding region (H-T-H motif). A coiled-coil region spans residues 71–93 (RVNRILEDEKDTLKRIELLLKLL).

Belongs to the nucleoid occlusion factor SlmA family. As to quaternary structure, homodimer. Interacts with FtsZ.

It is found in the cytoplasm. Its subcellular location is the nucleoid. In terms of biological role, required for nucleoid occlusion (NO) phenomenon, which prevents Z-ring formation and cell division over the nucleoid. Acts as a DNA-associated cell division inhibitor that binds simultaneously chromosomal DNA and FtsZ, and disrupts the assembly of FtsZ polymers. SlmA-DNA-binding sequences (SBS) are dispersed on non-Ter regions of the chromosome, preventing FtsZ polymerization at these regions. This chain is Nucleoid occlusion factor SlmA, found in Aliivibrio fischeri (strain MJ11) (Vibrio fischeri).